A 177-amino-acid chain; its full sequence is MALNLSQKQEVVAELADIAAKAHSLIAAEYAGTTVSQMTAMRKQARETGVFLKVVKNTLAARAVEGTDFAVAADKLVGPLLYAFSMEEPGAAGRLIKEFAKSNDKLQAKVVSIGGELFPAGHVDVLASLPTRDQALAMLARVLSEPAAMFARAVKAVGDKQGGGDEAAAPVAETAEA.

Belongs to the universal ribosomal protein uL10 family. In terms of assembly, part of the ribosomal stalk of the 50S ribosomal subunit. The N-terminus interacts with L11 and the large rRNA to form the base of the stalk. The C-terminus forms an elongated spine to which L12 dimers bind in a sequential fashion forming a multimeric L10(L12)X complex.

Its function is as follows. Forms part of the ribosomal stalk, playing a central role in the interaction of the ribosome with GTP-bound translation factors. The chain is Large ribosomal subunit protein uL10 from Xanthomonas axonopodis pv. citri (strain 306).